The sequence spans 263 residues: Aquaporin Lacbi1:247946 (263 aa).

The Cytoplasmic portion of the chain corresponds to Met1–Glu18. The helical transmembrane segment at Phe19–Ser39 threads the bilayer. Residues Thr40–Phe45 lie on the Extracellular side of the membrane. Residues Leu46–Ile66 traverse the membrane as a helical segment. The Cytoplasmic segment spans residues Ser67–Glu89. The NPA 1 motif lies at Asn72–Ala74. A helical transmembrane segment spans residues Val90–Ala110. The Extracellular segment spans residues Asn111–Gln143. A helical transmembrane segment spans residues Ala144–Leu164. Residues Asn165–Asn169 are Cytoplasmic-facing. A helical membrane pass occupies residues Gly170 to Ala190. Topologically, residues Ser191–Gln227 are extracellular. An NPA 2 motif is present at residues Asn201–Ala203. Residues Tyr228 to Tyr248 form a helical membrane-spanning segment. Residues Asp249 to Arg263 are Cytoplasmic-facing.

This sequence belongs to the MIP/aquaporin (TC 1.A.8) family.

The protein resides in the membrane. It catalyses the reaction H2O(in) = H2O(out). Functionally, water channel required to facilitate the transport of water across membranes. Shows low but significant water conductivity, but no glycerol nor ammonium transport activities. This Laccaria bicolor (strain S238N-H82 / ATCC MYA-4686) (Bicoloured deceiver) protein is Aquaporin Lacbi1:247946.